We begin with the raw amino-acid sequence, 269 residues long: Phosphonoacetaldehyde hydrolase (269 aa).

D10 serves as the catalytic Nucleophile. D10 and A12 together coordinate Mg(2+). K52 (schiff-base intermediate with substrate) is an active-site residue. Mg(2+) is bound at residue D186.

This sequence belongs to the HAD-like hydrolase superfamily. PhnX family. In terms of assembly, homodimer. Requires Mg(2+) as cofactor.

The catalysed reaction is phosphonoacetaldehyde + H2O = acetaldehyde + phosphate + H(+). Involved in phosphonate degradation. In Klebsiella pneumoniae subsp. pneumoniae (strain ATCC 700721 / MGH 78578), this protein is Phosphonoacetaldehyde hydrolase.